The sequence spans 487 residues: N-succinylglutamate 5-semialdehyde dehydrogenase (487 aa).

Residue 221-226 coordinates NAD(+); that stretch reads GSSRTG. Active-site residues include E244 and C278.

It belongs to the aldehyde dehydrogenase family. AstD subfamily.

The catalysed reaction is N-succinyl-L-glutamate 5-semialdehyde + NAD(+) + H2O = N-succinyl-L-glutamate + NADH + 2 H(+). Its pathway is amino-acid degradation; L-arginine degradation via AST pathway; L-glutamate and succinate from L-arginine: step 4/5. Functionally, catalyzes the NAD-dependent reduction of succinylglutamate semialdehyde into succinylglutamate. This Pseudomonas putida (strain ATCC 700007 / DSM 6899 / JCM 31910 / BCRC 17059 / LMG 24140 / F1) protein is N-succinylglutamate 5-semialdehyde dehydrogenase.